Consider the following 1431-residue polypeptide: Probable ATP-dependent RNA helicase spindle-E (1431 aa).

The Helicase ATP-binding domain occupies 127-294; sequence LAAIRENPVV…FAMSSSLPPV (168 aa). 140-147 contributes to the ATP binding site; it reads GETGCGKT. The short motif at 240–243 is the DEAH box element; it reads DEVH. One can recognise a Helicase C-terminal domain in the interval 354 to 526; the sequence is QSQQSYEEAK…NSVLKAKELE (173 aa). A Tudor domain is found at 937–1000; the sequence is AKAVTKGLQL…RLMSPQLKRD (64 aa).

The protein belongs to the DEAD box helicase family. DEAH subfamily.

The protein localises to the cytoplasm. The catalysed reaction is ATP + H2O = ADP + phosphate + H(+). Probable ATP-binding RNA helicase which plays a central role during spermatogenesis and oogenesis by repressing transposable elements and preventing their mobilization, which is essential for the germline integrity. Acts via the piRNA metabolic process, which mediates the repression of transposable elements during meiosis by forming complexes composed of piRNAs and Piwi and govern the methylation and subsequent repression of transposons. Involved in the repression of LTR retrotransposon copia. Also involved in telomere regulation by repressing specialized telomeric retroelements HeT-A, TAHRE, and TART; Drosophila telomeres being maintained by transposition of specialized telomeric retroelements. Involved in telomeric trans-silencing, a repression mechanism by which a transposon or a transgene inserted in subtelomeric heterochromatin has the capacity to repress in trans in the female germline, a homologous transposon, or transgene located in euchromatin. Involved in the repression of testis-expressed Stellate genes by the homologous Su(Ste) repeats. Required for anteroposterior and dorsoventral axis formation during oogenesis. The sequence is that of Probable ATP-dependent RNA helicase spindle-E (spn-E) from Drosophila mojavensis (Fruit fly).